Consider the following 236-residue polypeptide: Small ribosomal subunit protein uS2c (236 aa).

The protein belongs to the universal ribosomal protein uS2 family.

Its subcellular location is the plastid. It is found in the chloroplast. This Saccharum hybrid (Sugarcane) protein is Small ribosomal subunit protein uS2c (rps2).